The sequence spans 701 residues: Glycine--tRNA ligase beta subunit (701 aa).

The protein belongs to the class-II aminoacyl-tRNA synthetase family. As to quaternary structure, tetramer of two alpha and two beta subunits.

The protein resides in the cytoplasm. The catalysed reaction is tRNA(Gly) + glycine + ATP = glycyl-tRNA(Gly) + AMP + diphosphate. The protein is Glycine--tRNA ligase beta subunit of Anaeromyxobacter dehalogenans (strain 2CP-1 / ATCC BAA-258).